A 426-amino-acid polypeptide reads, in one-letter code: MPGEVSRSLYEKALTLFPGGVNSPVRAAVKPYPFYVERAEGPYIYTVDGEKLIDYVLAYGPLILGHKHPRVEEAVRRQLEKGWLYGAPYELEIRLAEKILKYYHPGGMVRFVNTGTEATMTAIRLARGVTGRKYIVKFNGCYHGAHDAVLVGAGSAAAEYGVPTSKGIPEEVAKLTLVAKYNDIESVEKIMSKHGDEVAAIIVEPVAGNAGVIPPKKGFLQELRRIASEHGALLIMDEVITGFRLALGGAQEYYRVKADITTLGKIVGGGFPIGVVVADRKIMEHLTPSGKVFNAGTFNAHPVTMAAGLATIEVLEEGTPYRVASEAGRALAEELESLVLSYGIDAAVNHVESMLQIFFVKGEVWSPEDAAKSDKKLYLKLHEELLKLGVFIAPSQMEAIFTSAAHTSDVVSETIEKLRKAFKRLR.

Position 265 is an N6-(pyridoxal phosphate)lysine (K265).

The protein belongs to the class-III pyridoxal-phosphate-dependent aminotransferase family. HemL subfamily. The cofactor is pyridoxal 5'-phosphate.

It localises to the cytoplasm. The enzyme catalyses (S)-4-amino-5-oxopentanoate = 5-aminolevulinate. The protein operates within porphyrin-containing compound metabolism; protoporphyrin-IX biosynthesis; 5-aminolevulinate from L-glutamyl-tRNA(Glu): step 2/2. The protein is Glutamate-1-semialdehyde 2,1-aminomutase of Hyperthermus butylicus (strain DSM 5456 / JCM 9403 / PLM1-5).